We begin with the raw amino-acid sequence, 319 residues long: Ribonuclease Z (319 aa).

Residues histidine 62, histidine 64, aspartate 66, histidine 67, histidine 139, aspartate 209, and histidine 268 each coordinate Zn(2+). The active-site Proton acceptor is the aspartate 66.

This sequence belongs to the RNase Z family. In terms of assembly, homodimer. Zn(2+) serves as cofactor.

It catalyses the reaction Endonucleolytic cleavage of RNA, removing extra 3' nucleotides from tRNA precursor, generating 3' termini of tRNAs. A 3'-hydroxy group is left at the tRNA terminus and a 5'-phosphoryl group is left at the trailer molecule.. In terms of biological role, zinc phosphodiesterase, which displays some tRNA 3'-processing endonuclease activity. Probably involved in tRNA maturation, by removing a 3'-trailer from precursor tRNA. The chain is Ribonuclease Z from Pseudomonas putida (strain ATCC 700007 / DSM 6899 / JCM 31910 / BCRC 17059 / LMG 24140 / F1).